A 382-amino-acid polypeptide reads, in one-letter code: Anhydro-N-acetylmuramic acid kinase (382 aa).

9–16 contacts ATP; that stretch reads GTSLDGID.

This sequence belongs to the anhydro-N-acetylmuramic acid kinase family.

The enzyme catalyses 1,6-anhydro-N-acetyl-beta-muramate + ATP + H2O = N-acetyl-D-muramate 6-phosphate + ADP + H(+). The protein operates within amino-sugar metabolism; 1,6-anhydro-N-acetylmuramate degradation. Its pathway is cell wall biogenesis; peptidoglycan recycling. In terms of biological role, catalyzes the specific phosphorylation of 1,6-anhydro-N-acetylmuramic acid (anhMurNAc) with the simultaneous cleavage of the 1,6-anhydro ring, generating MurNAc-6-P. Is required for the utilization of anhMurNAc either imported from the medium or derived from its own cell wall murein, and thus plays a role in cell wall recycling. This is Anhydro-N-acetylmuramic acid kinase from Bacillus cereus (strain AH820).